The sequence spans 151 residues: Transmembrane protein 239 (151 aa).

A run of 3 helical transmembrane segments spans residues 61 to 81 (LWGL…HALF), 85 to 105 (SYLL…LLPA), and 116 to 138 (ALLF…GLLT).

The protein resides in the membrane. This is Transmembrane protein 239 (Tmem239) from Mus musculus (Mouse).